The sequence spans 851 residues: M-phase phosphoprotein 8 (851 aa).

Residues 21–54 (NIGRSPEVEGGGAAGEEKDAATKGTVAVGDSEED) form a disordered region. A phosphoserine mark is found at serine 51, serine 85, and serine 136. The 60-residue stretch at 59–118 (FEVERILDMKCEGGKNLYKVRWKGYTSDDDTWEPEVHLEDCKEVLLEFRKKVAENKAKAV) folds into the Chromo domain. Positions 80 to 87 (WKGYTSDD) are histone H3K9me3 binding. The segment at 133–174 (EADSDIDQQGDTKEDTSPRKKKKKIKYKEDKSPDDLRKKRAK) is disordered. Threonine 144 bears the Phosphothreonine mark. Residues serine 149 and serine 164 each carry the phosphoserine; by CDK1 modification. Basic and acidic residues predominate over residues 159–169 (YKEDKSPDDLR). A phosphoserine mark is found at serine 188, serine 263, serine 267, and serine 274. The segment at 240–302 (REDVKDNRKT…KTGQDTVQES (63 aa)) is disordered. The span at 269–278 (TLEDESEDFL) shows a compositional bias: acidic residues. Basic and acidic residues predominate over residues 279–295 (SDNKEKQNVRTAKDKTG). The residue at position 313 (serine 313) is a Phosphoserine. The tract at residues 315-428 (EEAGTRVRRK…DKEEKARKEP (114 aa)) is disordered. A compositionally biased stretch (basic and acidic residues) spans 329-364 (RKFEEPKEIKKLENTNNFLERKMIPKKQRNQDKGRS). Threonine 379 bears the Phosphothreonine; by CDK1 mark. Phosphoserine occurs at positions 386 and 394. Residues 401–428 (EKERKNEPKEKYQKRYDFDKEEKARKEP) are compositionally biased toward basic and acidic residues. Position 447 is a phosphothreonine (threonine 447). 4 ANK repeats span residues 591 to 620 (TGMTLVMLAAAGGQDDLLRLLITKGAKVNG), 624 to 653 (NGTTALIHAAEKNFLTTVAILLEAGAFVNV), 657 to 686 (NGETALMKACKRGNSDIVRLVIECGADCNI), and 690 to 719 (HQNSALYFAKQCNNVLVYELLKSHLETLSR).

As to quaternary structure, homodimer. Interacts (via chromo domain) with histone H3K9me3. Has the highest affinity for H3K9me3, and lesser affinity for H3K9me2 and H3K9me1. Component of the HUSH complex; at least composed of TASOR, PPHLN1 and MPHOSPH8. Interacts with DNMT3, EHMT1 and SETDB1. Interacts with MORC2; the interaction associateS MORC2 with the HUSH complex which recruits MORC2 to heterochromatic loci. Interacts with ZNF638; leading to recruitment of the HUSH complex to unintegrated retroviral DNA. Interacts with TASOR. In terms of processing, phosphorylated in M (mitotic) phase. Phosphorylation by CDK1 promotes dissociation from chromatin.

Its subcellular location is the nucleus. The protein localises to the chromosome. Heterochromatin component that specifically recognizes and binds methylated 'Lys-9' of histone H3 (H3K9me) and promotes recruitment of proteins that mediate epigenetic repression. Mediates recruitment of the HUSH complex to H3K9me3 sites: the HUSH complex is recruited to genomic loci rich in H3K9me3 and is required to maintain transcriptional silencing by promoting recruitment of SETDB1, a histone methyltransferase that mediates further deposition of H3K9me3, as well as MORC2. Binds H3K9me and promotes DNA methylation by recruiting DNMT3A to target CpG sites; these can be situated within the coding region of the gene. Mediates down-regulation of CDH1 expression. Also represses L1 retrotransposons in collaboration with MORC2 and, probably, SETDB1, the silencing is dependent of repressive epigenetic modifications, such as H3K9me3 mark. Silencing events often occur within introns of transcriptionally active genes, and lead to the down-regulation of host gene expression. The HUSH complex is also involved in the silencing of unintegrated retroviral DNA by being recruited by ZNF638: some part of the retroviral DNA formed immediately after infection remains unintegrated in the host genome and is transcriptionally repressed. The sequence is that of M-phase phosphoprotein 8 from Rattus norvegicus (Rat).